The chain runs to 305 residues: Homoserine O-acetyltransferase (305 aa).

Catalysis depends on Cys142, which acts as the Acyl-thioester intermediate. Substrate contacts are provided by Lys163 and Ser192. The Proton acceptor role is filled by His233. Residue Glu235 is part of the active site. Arg247 is a substrate binding site.

This sequence belongs to the MetA family.

The protein localises to the cytoplasm. The enzyme catalyses L-homoserine + acetyl-CoA = O-acetyl-L-homoserine + CoA. Its pathway is amino-acid biosynthesis; L-methionine biosynthesis via de novo pathway; O-acetyl-L-homoserine from L-homoserine: step 1/1. In terms of biological role, transfers an acetyl group from acetyl-CoA to L-homoserine, forming acetyl-L-homoserine. The protein is Homoserine O-acetyltransferase of Methanomassiliicoccus intestinalis (strain Issoire-Mx1).